The chain runs to 485 residues: UDP-N-acetylmuramate--L-alanine ligase (485 aa).

112–118 (GTHGKTT) provides a ligand contact to ATP.

It belongs to the MurCDEF family.

The protein resides in the cytoplasm. It catalyses the reaction UDP-N-acetyl-alpha-D-muramate + L-alanine + ATP = UDP-N-acetyl-alpha-D-muramoyl-L-alanine + ADP + phosphate + H(+). It participates in cell wall biogenesis; peptidoglycan biosynthesis. Functionally, cell wall formation. This is UDP-N-acetylmuramate--L-alanine ligase from Variovorax paradoxus (strain S110).